Reading from the N-terminus, the 610-residue chain is Elongation factor 4 (610 aa).

The region spanning 7–189 (SRIRNFSIIA…AIVQRIPPPK (183 aa)) is the tr-type G domain. GTP is bound by residues 19–24 (DHGKST) and 136–139 (NKID).

It belongs to the TRAFAC class translation factor GTPase superfamily. Classic translation factor GTPase family. LepA subfamily.

It is found in the cell inner membrane. The enzyme catalyses GTP + H2O = GDP + phosphate + H(+). Functionally, required for accurate and efficient protein synthesis under certain stress conditions. May act as a fidelity factor of the translation reaction, by catalyzing a one-codon backward translocation of tRNAs on improperly translocated ribosomes. Back-translocation proceeds from a post-translocation (POST) complex to a pre-translocation (PRE) complex, thus giving elongation factor G a second chance to translocate the tRNAs correctly. Binds to ribosomes in a GTP-dependent manner. The polypeptide is Elongation factor 4 (Thermus thermophilus (strain ATCC BAA-163 / DSM 7039 / HB27)).